The primary structure comprises 391 residues: Tryptophan synthase beta chain (391 aa).

Position 84 is an N6-(pyridoxal phosphate)lysine (Lys84).

It belongs to the TrpB family. In terms of assembly, tetramer of two alpha and two beta chains. The cofactor is pyridoxal 5'-phosphate.

It catalyses the reaction (1S,2R)-1-C-(indol-3-yl)glycerol 3-phosphate + L-serine = D-glyceraldehyde 3-phosphate + L-tryptophan + H2O. It participates in amino-acid biosynthesis; L-tryptophan biosynthesis; L-tryptophan from chorismate: step 5/5. Functionally, the beta subunit is responsible for the synthesis of L-tryptophan from indole and L-serine. This Thermoanaerobacter sp. (strain X514) protein is Tryptophan synthase beta chain.